The primary structure comprises 60 residues: LKCHKLVPPFWKTCPEGKNLCYKMYMVATPMLPVKRGCINVCPKDSALVKYMCCNTNKCN.

Disulfide bonds link Cys-3–Cys-21, Cys-14–Cys-38, Cys-42–Cys-53, and Cys-54–Cys-59.

Belongs to the three-finger toxin family. Short-chain subfamily. Type IA cytotoxin sub-subfamily. As to quaternary structure, monomer in solution; Homodimer and oligomer in the presence of negatively charged lipids forming a pore with a size ranging between 20 and 30 Angstroms. In terms of tissue distribution, expressed by the venom gland.

It localises to the secreted. The protein resides in the target cell membrane. Its function is as follows. Shows cytolytic activity on many different cells by forming pore in lipid membranes. In vivo, increases heart rate or kills the animal by cardiac arrest. In addition, it binds to heparin with high affinity, interacts with Kv channel-interacting protein 1 (KCNIP1) in a calcium-independent manner, and binds to integrin alpha-V/beta-3 (ITGAV/ITGB3) with moderate affinity. The polypeptide is Cytotoxin 7 (Naja annulifera (Banded Egyptian cobra)).